Here is a 315-residue protein sequence, read N- to C-terminus: Calumenin (315 aa).

A signal peptide spans 1-19 (MDTRRLLLCLCLWVACVVS). EF-hand domains are found at residues 68–103 (ESKERLGMIVSKIDLDNDGYVTEGELTAWIKKAQKK), 104–139 (YVYDNVERQWQEFDLNQDGLVSWDEYRNVTYGTYLD), 151–186 (QMMVRDERRFKMADQDGDLIATKEEFTAFLHPEEFD), 188–223 (MKDIVVLETMEDIDKNGDGLIDLEEYIGDMYNHDGD), 229–264 (WVKTEREQFVEFRDKNHDGKMDKEETKDWILPSDYD), and 265–300 (HAEAESRHLVYESDQNKDSKLTREEIVDKYDLFVGS). Residues aspartate 81, aspartate 83, aspartate 85, tyrosine 87, glutamate 92, aspartate 117, asparagine 119, aspartate 121, and glutamate 128 each contribute to the Ca(2+) site. N-linked (GlcNAc...) asparagine glycosylation is present at asparagine 131. Aspartate 164, aspartate 166, aspartate 168, glutamate 175, aspartate 201, asparagine 203, aspartate 205, glutamate 212, aspartate 242, asparagine 244, aspartate 246, lysine 248, glutamate 253, aspartate 278, asparagine 280, aspartate 282, lysine 284, and glutamate 289 together coordinate Ca(2+). The short motif at 312 to 315 (HDEF) is the Prevents secretion from ER element.

It belongs to the CREC family. As to quaternary structure, interacts with ggcx.

Its subcellular location is the endoplasmic reticulum membrane. It localises to the golgi apparatus. The protein localises to the secreted. It is found in the melanosome. The protein resides in the sarcoplasmic reticulum lumen. Functionally, involved in regulation of vitamin K-dependent carboxylation of multiple N-terminal glutamate residues. Seems to inhibit gamma-carboxylase ggcx. Binds 7 calcium ions with a low affinity. This Xenopus tropicalis (Western clawed frog) protein is Calumenin (calu).